We begin with the raw amino-acid sequence, 271 residues long: Urease accessory protein UreD (271 aa).

The protein belongs to the UreD family. In terms of assembly, ureD, UreF and UreG form a complex that acts as a GTP-hydrolysis-dependent molecular chaperone, activating the urease apoprotein by helping to assemble the nickel containing metallocenter of UreC. The UreE protein probably delivers the nickel.

The protein localises to the cytoplasm. In terms of biological role, required for maturation of urease via the functional incorporation of the urease nickel metallocenter. The chain is Urease accessory protein UreD from Haemophilus influenzae (strain 86-028NP).